Here is a 180-residue protein sequence, read N- to C-terminus: Oligoribonuclease (180 aa).

Residues 7–170 (LIWIDLEMTG…DDIRESIAEL (164 aa)) enclose the Exonuclease domain. Y128 is an active-site residue.

The protein belongs to the oligoribonuclease family.

The protein localises to the cytoplasm. Functionally, 3'-to-5' exoribonuclease specific for small oligoribonucleotides. The protein is Oligoribonuclease of Pseudomonas fluorescens (strain ATCC BAA-477 / NRRL B-23932 / Pf-5).